Consider the following 325-residue polypeptide: Forkhead box protein B1 (325 aa).

Positions 12–103 (QKPPYSYISL…GDMFENGSFL (92 aa)) form a DNA-binding region, fork-head. Low complexity predominate over residues 284-309 (LSNSPPSLSPTSSQTATSQSSPATPS). The disordered stretch occupies residues 284–325 (LSNSPPSLSPTSSQTATSQSSPATPSETLTSPASALHSVAVH).

Expressed widespread in the early developing ventricular zone of the neural tube and later restricted to areas of the spinal cord, hindbrain, thalamus and hypothalamus. Expressed in epithelial cells of developing and adult mammary glands.

Its subcellular location is the nucleus. Transcription factor expressed by neural progenitor cells in specific regions of the embryonic neuroepithelium. Essential for the mammillary nuclei maintenance. Negatively regulates the proliferation of oligodendrocyte progenitors and promotes oligodendrocyte maturation. Also expressed in mammary glands, plays a role in lactation, controls development of mammary glands and the inferior colliculi of the midbrain in the central nervous system that regulates the milk-ejection reflex. In Mus musculus (Mouse), this protein is Forkhead box protein B1 (Foxb1).